Consider the following 36-residue polypeptide: Gloverin (36 aa).

It is found in the secreted. In terms of biological role, antibacterial protein. The polypeptide is Gloverin (Heliothis virescens (Tobacco budworm moth)).